A 380-amino-acid chain; its full sequence is Reducing-end xylose-releasing exo-oligoxylanase Rex8A (380 aa).

Glu-70 acts as the Proton donor in catalysis. Residue Asp-265 is the Proton acceptor of the active site.

The protein belongs to the glycosyl hydrolase 8 (cellulase D) family.

It catalyses the reaction Hydrolysis of (1-&gt;4)-beta-D-xylose residues from the reducing end of oligosaccharides.. Its pathway is glycan degradation; xylan degradation. In terms of biological role, involved in depolymerization of xylan, a major component of the lignocellulosic substrates. Acts as an exo-oligoxylanase that efficiently hydrolyzes xylooligosaccharides, releasing xylose from their reducing ends. Hydrolyzes xylooligomers of 3 to 6 xylose units to xylose and xylobiose. Besides linear xylooligosaccharides, also hydrolyzes branched xylooligomers, such as xylooligomers decorated with 4-O-methyl-D-glucuronic acid moieties. Its proposed role is the degradation of xylooligomers produced by the activity of extracellular xylanases once they have been transported inside cells. Shows minor activity on polymeric xylan (glucuronoxylan from beechwood). Is not active on cellooligosaccharides or cellulosic substrates, or on other polysaccharides such as pectin, polygalacturonic acid, laminarin, or lichenan. This chain is Reducing-end xylose-releasing exo-oligoxylanase Rex8A, found in Paenibacillus barcinonensis.